A 274-amino-acid chain; its full sequence is MSVVSLPQMLEAGVHFGHQTRRWNPKMRRYIFTDRNGIHIIDLTQTAHLLDEAYSYLREASDQGKKILFVGTKRQAAPVIAQEAKRCGMFWVNQRWLGGMLTNWDTIRTSVDQLKELETMEANGTLDLLPKKEASVTRKKLERLTKYLGGLKNMRRKPDILLVVDQRREQNAVMEARRLNIPIVSLLDTNCDPDLTDVGIPANDDAIRSIRLIVGKLADAIYEGRHGQLEDFSEEEPVPAAAPVAAVAVAVAAPAEAESEDKGEVLYSFDDEEE.

A disordered region spans residues 255-274 (AEAESEDKGEVLYSFDDEEE).

The protein belongs to the universal ribosomal protein uS2 family.

This chain is Small ribosomal subunit protein uS2, found in Gloeobacter violaceus (strain ATCC 29082 / PCC 7421).